Here is a 315-residue protein sequence, read N- to C-terminus: uncharacterized protein (315 aa).

Residues 1-23 (MSNTDALNTANTQITENVDTSSM) show a composition bias toward polar residues. The interval 1–31 (MSNTDALNTANTQITENVDTSSMKVEKTHDS) is disordered.

This is an uncharacterized protein from Acanthamoeba polyphaga mimivirus (APMV).